We begin with the raw amino-acid sequence, 634 residues long: 1-deoxy-D-xylulose-5-phosphate synthase (634 aa).

Residues H74 and 115–117 (AHS) contribute to the thiamine diphosphate site. D146 contributes to the Mg(2+) binding site. Thiamine diphosphate contacts are provided by residues 147–148 (GA), N176, Y283, and E365. N176 is a Mg(2+) binding site.

The protein belongs to the transketolase family. DXPS subfamily. As to quaternary structure, homodimer. Mg(2+) is required as a cofactor. It depends on thiamine diphosphate as a cofactor.

The enzyme catalyses D-glyceraldehyde 3-phosphate + pyruvate + H(+) = 1-deoxy-D-xylulose 5-phosphate + CO2. The protein operates within metabolic intermediate biosynthesis; 1-deoxy-D-xylulose 5-phosphate biosynthesis; 1-deoxy-D-xylulose 5-phosphate from D-glyceraldehyde 3-phosphate and pyruvate: step 1/1. In terms of biological role, catalyzes the acyloin condensation reaction between C atoms 2 and 3 of pyruvate and glyceraldehyde 3-phosphate to yield 1-deoxy-D-xylulose-5-phosphate (DXP). The chain is 1-deoxy-D-xylulose-5-phosphate synthase from Burkholderia mallei (strain ATCC 23344).